Here is a 218-residue protein sequence, read N- to C-terminus: Probable nicotinate-nucleotide adenylyltransferase (218 aa).

It belongs to the NadD family.

The catalysed reaction is nicotinate beta-D-ribonucleotide + ATP + H(+) = deamido-NAD(+) + diphosphate. Its pathway is cofactor biosynthesis; NAD(+) biosynthesis; deamido-NAD(+) from nicotinate D-ribonucleotide: step 1/1. Functionally, catalyzes the reversible adenylation of nicotinate mononucleotide (NaMN) to nicotinic acid adenine dinucleotide (NaAD). This is Probable nicotinate-nucleotide adenylyltransferase from Burkholderia lata (strain ATCC 17760 / DSM 23089 / LMG 22485 / NCIMB 9086 / R18194 / 383).